We begin with the raw amino-acid sequence, 100 residues long: Protein E7 (100 aa).

The E7 terminal domain stretch occupies residues 1 to 43 (MIGKQATLRDIVLEELVQPIDLHCHEELPDLPEDIEASVVEEE). An LXCXE motif; interaction with host RB1 and TMEM173/STING motif is present at residues 22 to 26 (LHCHE). Residues 55–91 (CGGCEVRLKLYVWATDAGIRNLQDCLLGDVRLLCPTC) fold into a zinc finger. Residues 73 to 81 (IRNLQDCLL) carry the Nuclear export signal motif.

The protein belongs to the papillomaviridae E7 protein family. Homodimer. Homooligomer. Interacts with host RB1; this interaction induces dissociation of RB1-E2F1 complex thereby disrupting RB1 activity. Interacts with host EP300; this interaction represses EP300 transcriptional activity. Interacts with protein E2; this interaction inhibits E7 oncogenic activity. Interacts with host TMEM173/STING; this interaction impairs the ability of TMEM173/STING to sense cytosolic DNA and promote the production of type I interferon (IFN-alpha and IFN-beta). Highly phosphorylated.

It is found in the host cytoplasm. The protein localises to the host nucleus. In terms of biological role, plays a role in viral genome replication by driving entry of quiescent cells into the cell cycle. Stimulation of progression from G1 to S phase allows the virus to efficiently use the cellular DNA replicating machinery to achieve viral genome replication. E7 protein has both transforming and trans-activating activities. Induces the disassembly of the E2F1 transcription factor from RB1, with subsequent transcriptional activation of E2F1-regulated S-phase genes. Interferes with host histone deacetylation mediated by HDAC1 and HDAC2, leading to transcription activation. Also plays a role in the inhibition of both antiviral and antiproliferative functions of host interferon alpha. Interaction with host TMEM173/STING impairs the ability of TMEM173/STING to sense cytosolic DNA and promote the production of type I interferon (IFN-alpha and IFN-beta). The chain is Protein E7 from Homo sapiens (Human).